A 416-amino-acid polypeptide reads, in one-letter code: NADH-quinone oxidoreductase subunit D (416 aa).

This sequence belongs to the complex I 49 kDa subunit family. As to quaternary structure, NDH-1 is composed of 14 different subunits. Subunits NuoB, C, D, E, F, and G constitute the peripheral sector of the complex.

The protein resides in the cell inner membrane. The enzyme catalyses a quinone + NADH + 5 H(+)(in) = a quinol + NAD(+) + 4 H(+)(out). Its function is as follows. NDH-1 shuttles electrons from NADH, via FMN and iron-sulfur (Fe-S) centers, to quinones in the respiratory chain. The immediate electron acceptor for the enzyme in this species is believed to be ubiquinone. Couples the redox reaction to proton translocation (for every two electrons transferred, four hydrogen ions are translocated across the cytoplasmic membrane), and thus conserves the redox energy in a proton gradient. This chain is NADH-quinone oxidoreductase subunit D, found in Gluconacetobacter diazotrophicus (strain ATCC 49037 / DSM 5601 / CCUG 37298 / CIP 103539 / LMG 7603 / PAl5).